The chain runs to 681 residues: PTS system glucose-specific EIICBA component (681 aa).

The PTS EIIC type-1 domain maps to 3–414 (KKLFGQLQRI…LKYKTPGRED (412 aa)). Transmembrane regions (helical) follow at residues 16–36 (LMLP…GTAM), 73–93 (MIFA…AAIA), 126–146 (ILGI…GALA), 170–190 (FVPI…ALIW), 199–219 (AFST…FGFI), 273–293 (FMQG…LAIY), 303–323 (VVAG…ITEP), 328–348 (FLFV…LSFL), 355–375 (LHLG…GILP), and 383–403 (VIPV…FLIV). A PTS EIIB type-1 domain is found at 425-506 (TELPYAVLEA…QQIMNGQVVE (82 aa)). The active-site Phosphocysteine intermediate; for EIIB activity is the Cys-447. Positions 551–655 (DQVFSEKMMG…SDITPIIVTQ (105 aa)) constitute a PTS EIIA type-1 domain. His-603 functions as the Tele-phosphohistidine intermediate; for EIIA activity in the catalytic mechanism.

The protein localises to the cell membrane. It carries out the reaction N(pros)-phospho-L-histidyl-[protein] + D-glucose(out) = D-glucose 6-phosphate(in) + L-histidyl-[protein]. Functionally, the phosphoenolpyruvate-dependent sugar phosphotransferase system (sugar PTS), a major carbohydrate active transport system, catalyzes the phosphorylation of incoming sugar substrates concomitantly with their translocation across the cell membrane. This system is involved in glucose transport. The sequence is that of PTS system glucose-specific EIICBA component (ptsG) from Staphylococcus aureus (strain bovine RF122 / ET3-1).